The following is a 271-amino-acid chain: uncharacterized protein (271 aa).

The signal sequence occupies residues 1 to 18 (MKGFFLIAGFLLFARALC). The Lumenal portion of the chain corresponds to 19 to 187 (ASWNVEEGTL…FSPPPKRANY (169 aa)). A helical membrane pass occupies residues 188–208 (FLSICFSVSVVVSLIGLLGVW). The Cytoplasmic portion of the chain corresponds to 209–230 (QKLLPKSNVYSVSSSSFARTFG). The helical transmembrane segment at 231 to 251 (FASLAVAEILLFIYWTSLSIF) threads the bilayer. Residues 252–271 (QFGAYAAGVAIMCGIAAKSL) lie on the Lumenal side of the membrane.

It is found in the endoplasmic reticulum membrane. This is an uncharacterized protein from Schizosaccharomyces pombe (strain 972 / ATCC 24843) (Fission yeast).